The following is a 152-amino-acid chain: Proteolipid protein 2 (152 aa).

N-linked (GlcNAc...) asparagine glycosylation is present at Asn-18. The MARVEL domain maps to 19–137 (FSRTRKGILL…DAYVTFPVRQ (119 aa)). The next 3 membrane-spanning stretches (helical) occupy residues 25 to 45 (GILL…FSAS), 48 to 68 (GYSS…VVYM), and 85 to 105 (FFRT…VLVE). N-linked (GlcNAc...) asparagine glycosylation is present at Asn-108. The chain crosses the membrane as a helical span at residues 112 to 132 (IVAGVLGLIATCLFGYDAYVT).

In terms of tissue distribution, enriched in colonic mucosa. The expression of A4 follows a gradient along the crypto-villus axis with the most abundant message occurring in the lower half of the crypt.

The protein localises to the membrane. May play a role in cell differentiation in the intestinal epithelium. This Homo sapiens (Human) protein is Proteolipid protein 2 (PLP2).